Consider the following 143-residue polypeptide: Hemoglobin subunit alpha (143 aa).

A Globin domain is found at 2–143 (VLSPADKTNV…VSTVLVSKYR (142 aa)). The residue at position 4 (S4) is a Phosphoserine. K8 carries the post-translational modification N6-succinyllysine. A Phosphothreonine modification is found at T9. K12 carries the N6-succinyllysine modification. K17 is subject to N6-acetyllysine; alternate. K17 is modified (N6-succinyllysine; alternate). Y25 carries the phosphotyrosine modification. At S36 the chain carries Phosphoserine. The residue at position 41 (K41) is an N6-succinyllysine. S51 is subject to Phosphoserine. Position 60 (H60) interacts with O2. H89 provides a ligand contact to heme b. S104 bears the Phosphoserine mark. A Phosphothreonine modification is found at T110. Residue S126 is modified to Phosphoserine. At T136 the chain carries Phosphothreonine. At S140 the chain carries Phosphoserine.

It belongs to the globin family. Heterotetramer of two alpha chains and two beta chains. As to expression, red blood cells.

Its function is as follows. Involved in oxygen transport from the lung to the various peripheral tissues. Hemopressin acts as an antagonist peptide of the cannabinoid receptor CNR1. Hemopressin-binding efficiently blocks cannabinoid receptor CNR1 and subsequent signaling. The chain is Hemoglobin subunit alpha (HBA) from Pipistrellus abramus (Japanese pipistrelle).